The following is an 861-amino-acid chain: MDKKEYSETFYHPYKPYDIQVQLMETVYRVLSEGKKIAILESPTGTGKTLSLICATMTWLRMNKADIFTRMETNIKTNEDDSENLSDDEPDWVIDTYRKSVLQEKVDLLNDYEKHLNEINTTSCKQLKTMCDLDKEHGRYKSVDPLRKKRKGARHLDVSLEEQDFIPRPYESDSENNDTSKSTRGGRISDKDYKLSELNSQIITLLDKIDGKVSRDPNNGDRFDVTNQNPVKIYYASRTYSQLGQFTSQLRLPSFPSSFRDKVPNEKVKYLPLASKKQLCINPKVMKWKTLEAINDACADLRHSKEGCMFYQNTNEWRHCPDTLALRDMIFSEIQDIEDLVPLGKSLGICPYYASREALPIAEVVTLPYQYLLSESTRSSLQINLENSIVIIDEAHNLIETINSIYSSQISLEDLKNCHKGIVTYFNKFKSRLNPGNRVNLLKLNSLLMTLIQFIVKNFKKIGQEIDPNDMFTGSNIDTLNIHKLLRYIKVSKIAYKIDTYNQALKEEESSKNENPIKETHKKSVSSQPLLFKVSQFLYCLTNLTSEGQFFFEKNYSIKYMLLEPSKPFESILNQAKCVVLAGGTMEPMSEFLSNLLPEVPSKDITTLSCNHVIPKENLQTYITNQPELEFTFEKRMSPSLVNNHLFQFFVDLSKAVPKKGGIVAFFPSYQYLAHVIQCWKQNDRFATLNNVRKIFYEAKDGDDILSGYSDSVAEGRGSLLLAIVGGKLSEGINFQDDLCRAVVMVGLPFPNIFSGELIVKRKHLAAKIMKSGGTEEEASRATKEFMENICMKAVNQSVGRAIRHANDYANIYLLDVRYNRPNFRKKLSRWVQDSINSEHTTHQVISSTRKFFSMRSLNSR.

The 453-residue stretch at 6-458 (YSETFYHPYK…MTLIQFIVKN (453 aa)) folds into the Helicase ATP-binding domain. 42 to 49 (SPTGTGKT) is an ATP binding site. 2 positions are modified to phosphoserine: S86 and S172. Positions 161 to 188 (EEQDFIPRPYESDSENNDTSKSTRGGRI) are disordered. C280, C298, C308, and C350 together coordinate [4Fe-4S] cluster. Positions 393-396 (DEAH) match the DEAH box motif.

This sequence belongs to the DEAD box helicase family. DEAH subfamily. DDX11/CHL1 sub-subfamily. [4Fe-4S] cluster is required as a cofactor.

Its subcellular location is the nucleus. The catalysed reaction is Couples ATP hydrolysis with the unwinding of duplex DNA at the replication fork by translocating in the 5'-3' direction. This creates two antiparallel DNA single strands (ssDNA). The leading ssDNA polymer is the template for DNA polymerase III holoenzyme which synthesizes a continuous strand.. It catalyses the reaction ATP + H2O = ADP + phosphate + H(+). Functionally, ATP-dependent DNA helicase important for chromosome transmission and normal cell cycle progression in G(2)/M. May have a role in changing DNA topology to allow the loading of proteins involved in maintaining sister chromatid cohesion in the vicinity of the centromeres. Has a specific role in chromosome segregation during meiosis II. This Saccharomyces cerevisiae (strain YJM789) (Baker's yeast) protein is ATP-dependent DNA helicase CHL1 (CHL1).